The chain runs to 98 residues: Large ribosomal subunit protein uL23 (98 aa).

This sequence belongs to the universal ribosomal protein uL23 family. Part of the 50S ribosomal subunit. Contacts protein L29, and trigger factor when it is bound to the ribosome.

Its function is as follows. One of the early assembly proteins it binds 23S rRNA. One of the proteins that surrounds the polypeptide exit tunnel on the outside of the ribosome. Forms the main docking site for trigger factor binding to the ribosome. The polypeptide is Large ribosomal subunit protein uL23 (Methylorubrum populi (strain ATCC BAA-705 / NCIMB 13946 / BJ001) (Methylobacterium populi)).